The primary structure comprises 352 residues: tRNA N6-adenosine threonylcarbamoyltransferase (352 aa).

Residues His114, His118, and Tyr135 each coordinate a divalent metal cation. Substrate is bound by residues 135–139, Asp167, Gly182, Glu186, and Asn283; that span reads YVSGG. Asp311 lines the a divalent metal cation pocket.

It belongs to the KAE1 / TsaD family. In terms of assembly, component of the EKC/KEOPS complex composed of at least BUD32, CGI121, GON7, KAE1 and PCC1; the whole complex dimerizes. It depends on a divalent metal cation as a cofactor.

The protein resides in the cytoplasm. The protein localises to the nucleus. The enzyme catalyses L-threonylcarbamoyladenylate + adenosine(37) in tRNA = N(6)-L-threonylcarbamoyladenosine(37) in tRNA + AMP + H(+). Its function is as follows. Component of the EKC/KEOPS complex that is required for the formation of a threonylcarbamoyl group on adenosine at position 37 (t(6)A37) in tRNAs that read codons beginning with adenine. The complex is probably involved in the transfer of the threonylcarbamoyl moiety of threonylcarbamoyl-AMP (TC-AMP) to the N6 group of A37. KAE1 likely plays a direct catalytic role in this reaction, but requires other protein(s) of the complex to fulfill this activity. The EKC/KEOPS complex also promotes both telomere uncapping and telomere elongation. The complex is required for efficient recruitment of transcriptional coactivators. The chain is tRNA N6-adenosine threonylcarbamoyltransferase from Phaeosphaeria nodorum (strain SN15 / ATCC MYA-4574 / FGSC 10173) (Glume blotch fungus).